A 228-amino-acid polypeptide reads, in one-letter code: Phosphoglycolate phosphatase (228 aa).

The Nucleophile role is filled by D12. D12, D14, and D177 together coordinate Mg(2+).

This sequence belongs to the HAD-like hydrolase superfamily. CbbY/CbbZ/Gph/YieH family. Mg(2+) is required as a cofactor.

It catalyses the reaction 2-phosphoglycolate + H2O = glycolate + phosphate. The protein operates within organic acid metabolism; glycolate biosynthesis; glycolate from 2-phosphoglycolate: step 1/1. In terms of biological role, specifically catalyzes the dephosphorylation of 2-phosphoglycolate. Is involved in the dissimilation of the intracellular 2-phosphoglycolate formed during the DNA repair of 3'-phosphoglycolate ends, a major class of DNA lesions induced by oxidative stress. This chain is Phosphoglycolate phosphatase, found in Vibrio parahaemolyticus serotype O3:K6 (strain RIMD 2210633).